A 599-amino-acid polypeptide reads, in one-letter code: Elongation factor 4 (599 aa).

A tr-type G domain is found at 3–185; sequence KNIRNFSIIA…AIVERIPPPS (183 aa). Residues 15–20 and 132–135 contribute to the GTP site; these read DHGKST and NKID.

The protein belongs to the TRAFAC class translation factor GTPase superfamily. Classic translation factor GTPase family. LepA subfamily.

The protein resides in the cell membrane. It catalyses the reaction GTP + H2O = GDP + phosphate + H(+). Functionally, required for accurate and efficient protein synthesis under certain stress conditions. May act as a fidelity factor of the translation reaction, by catalyzing a one-codon backward translocation of tRNAs on improperly translocated ribosomes. Back-translocation proceeds from a post-translocation (POST) complex to a pre-translocation (PRE) complex, thus giving elongation factor G a second chance to translocate the tRNAs correctly. Binds to ribosomes in a GTP-dependent manner. The polypeptide is Elongation factor 4 (Syntrophomonas wolfei subsp. wolfei (strain DSM 2245B / Goettingen)).